The sequence spans 307 residues: tRNA dimethylallyltransferase 1 (307 aa).

Residue 10–17 coordinates ATP; that stretch reads GPTASGKT. A substrate-binding site is contributed by 12-17; the sequence is TASGKT. Residues 35–38 form an interaction with substrate tRNA region; that stretch reads DSRQ.

Belongs to the IPP transferase family. In terms of assembly, monomer. Mg(2+) serves as cofactor.

The enzyme catalyses adenosine(37) in tRNA + dimethylallyl diphosphate = N(6)-dimethylallyladenosine(37) in tRNA + diphosphate. Its function is as follows. Catalyzes the transfer of a dimethylallyl group onto the adenine at position 37 in tRNAs that read codons beginning with uridine, leading to the formation of N6-(dimethylallyl)adenosine (i(6)A). This Geotalea daltonii (strain DSM 22248 / JCM 15807 / FRC-32) (Geobacter daltonii) protein is tRNA dimethylallyltransferase 1.